The following is a 334-amino-acid chain: Malate dehydrogenase (334 aa).

16-22 contributes to the NAD(+) binding site; sequence GAAGQIA. Residues Arg-97 and Arg-103 each contribute to the substrate site. NAD(+) contacts are provided by residues Asn-110, Gln-117, and 134–136; that span reads VGN. Residues Asn-136 and Arg-167 each coordinate substrate. Residue His-192 is the Proton acceptor of the active site.

Belongs to the LDH/MDH superfamily. MDH type 2 family.

The catalysed reaction is (S)-malate + NAD(+) = oxaloacetate + NADH + H(+). In terms of biological role, catalyzes the reversible oxidation of malate to oxaloacetate. In Nocardia farcinica (strain IFM 10152), this protein is Malate dehydrogenase.